Here is a 401-residue protein sequence, read N- to C-terminus: MFDKQEFVSKLVTEEKAKIVLLVMDGLGDIPVNGKTPLQAANTPNLDNLAKESDLGQTIPVLPGITPGSGPGHLSLFGYDPIKYQIGRGILEALGIGVEVGEKDVVARANFATWDGKVVLDRRAGRPATEESAKVVQLLSEKIKKIEDVEITFYPGKEHRFVVKFTGEGLGDKVTDADPQKEGHPMAWAEGLDEPSKKTARIVNELIKKIAEVLKDNSKINFALIRGFSKYPDLPKFPQVYKMKAGAIATYPMYRGLAKLVGMEIIETGQTVADEIKTLKEKWNDYDFFYVHVKKTDSYGEDGKFEEKVKVIEEVDAIIPEIVSLNPDVLVITGDHSTPVPLKAHSWHPVPLLIWSKYTRRGLSQAFNEFECARGTLGTIHASDVMTLALAYAGRLEKFGA.

It belongs to the BPG-independent phosphoglycerate mutase family. A-PGAM subfamily.

The enzyme catalyses (2R)-2-phosphoglycerate = (2R)-3-phosphoglycerate. Its pathway is carbohydrate degradation; glycolysis; pyruvate from D-glyceraldehyde 3-phosphate: step 3/5. Its function is as follows. Catalyzes the interconversion of 2-phosphoglycerate and 3-phosphoglycerate. This Thermotoga sp. (strain RQ2) protein is Probable 2,3-bisphosphoglycerate-independent phosphoglycerate mutase.